Here is a 59-residue protein sequence, read N- to C-terminus: Conotoxin Ts-03 (59 aa).

The signal sequence occupies residues 1–19 (MRCLPVFIILLLLIPSAAS). Positions 20–47 (VAQPKTKDDVALASFYDNAKRTLQRHWA) are excised as a propeptide.

Belongs to the conotoxin T superfamily. Contains 2 disulfide bonds that can be either 'C1-C3, C2-C4' or 'C1-C4, C2-C3', since these disulfide connectivities have been observed for conotoxins with cysteine framework V (for examples, see AC P0DQQ7 and AC P81755). As to expression, expressed by the venom duct.

It is found in the secreted. In Conus tessulatus (Tessellate cone), this protein is Conotoxin Ts-03.